A 386-amino-acid chain; its full sequence is Protein DOM34 (386 aa).

Belongs to the eukaryotic release factor 1 family. Pelota subfamily. In terms of assembly, monomer. Component of the Dom34-Hbs1 complex, also named Pelota-HBS1L complex, composed of DOM34 and HBS1. A divalent metal cation is required as a cofactor.

The protein localises to the cytoplasm. Its function is as follows. Component of the Dom34-Hbs1 complex, a complex that recognizes stalled ribosomes and triggers the No-Go Decay (NGD) pathway. In the Dom34-Hbs1 complex, DOM34 recognizes ribosomes stalled at the 3' end of an mRNA and engages stalled ribosomes by destabilizing mRNA in the mRNA channel. Following ribosome-binding, the Dom34-Hbs1 complex promotes the disassembly of stalled ribosomes, followed by degradation of damaged mRNAs as part of the NGD pathway. The Dom34-Hbs1 complex is also involved in non-functional rRNA decay. The polypeptide is Protein DOM34 (Saccharomyces cerevisiae (strain ATCC 204508 / S288c) (Baker's yeast)).